Consider the following 413-residue polypeptide: Adenylosuccinate synthetase (413 aa).

Residues 11 to 17 (GDEGKGK) and 39 to 41 (GHT) contribute to the GTP site. Asp-12 (proton acceptor) is an active-site residue. Mg(2+)-binding residues include Asp-12 and Gly-39. Residues 12-15 (DEGK), 37-40 (NAGH), Thr-125, Arg-139, Gln-217, Thr-232, and Arg-296 each bind IMP. The active-site Proton donor is the His-40. Substrate is bound at residue 292–298 (TTTGRPR). GTP is bound by residues Arg-298, 324-326 (KLD), and 402-404 (STG).

Belongs to the adenylosuccinate synthetase family. Homodimer. Mg(2+) is required as a cofactor.

It localises to the cytoplasm. It catalyses the reaction IMP + L-aspartate + GTP = N(6)-(1,2-dicarboxyethyl)-AMP + GDP + phosphate + 2 H(+). It functions in the pathway purine metabolism; AMP biosynthesis via de novo pathway; AMP from IMP: step 1/2. In terms of biological role, plays an important role in the de novo pathway of purine nucleotide biosynthesis. Catalyzes the first committed step in the biosynthesis of AMP from IMP. This chain is Adenylosuccinate synthetase, found in Nautilia profundicola (strain ATCC BAA-1463 / DSM 18972 / AmH).